A 219-amino-acid chain; its full sequence is Transmembrane emp24 domain-containing protein 10 (219 aa).

Residues 1 to 31 (MSGSSGPLSWPGPRPCALLFLLLLGPSSVLA) form the signal peptide. Residues 1–142 (MSGSSGPLSW…KNYEEIAKVE (142 aa)) are required for interaction with STX17. The Lumenal segment spans residues 32-185 (ISFHLPVNSR…RDTNESTNTR (154 aa)). In terms of domain architecture, GOLD spans 41-193 (RKCLREEIHK…TRVLYFSIFS (153 aa)). Residues 147-178 (LEVELRRLEDLSESIVNDFAYMKKREEEMRDT) are required for TMED10 and TMED2 cis-Golgi network localization. Residues R171 and R176 each carry the dimethylated arginine modification. An N-linked (GlcNAc...) asparagine glycan is attached at N179. A helical transmembrane segment spans residues 186–206 (VLYFSIFSMLCLIGLATWQVF). Residues 204–219 (QVFYLRRFFKAKKLIE) are interaction with COPG1. Over 207–219 (YLRRFFKAKKLIE) the chain is Cytoplasmic. An interaction with ARF1 and IL1B region spans residues 207-219 (YLRRFFKAKKLIE). The short motif at 211 to 212 (FF) is the COPII vesicle coat-binding element. The COPI vesicle coat-binding motif lies at 211 to 219 (FFKAKKLIE).

It belongs to the EMP24/GP25L family. Predominantly dimeric and to a lesser extent monomeric in the ER. Monomer and dimer in ERGIC and cis-Golgi network. Forms homooligomer (via GOLD domain); the assembly is promoted by direct binding with leaderless cargos and may form a protein channel that facilitates cargo entry into the ERGIC. Forms heterooligomeric complexes with other members of the p24 family such as TMED2, TMED7 and TMED9. Interacts (via GOLD domain) with TMED2 (via GOLD domain); the complex is required for export of TMED10 from the ER to the cis-Golgi network; the complex is proposed to be involved in cis-Golgi network dynamics and / or biogenesis. Associates with the COPI vesicle coat subunits (coatomer). Tetramerization of the cytoplasmic domain at the Golgi membrane in vitro; the complex is proposed to interact with COPI coatomer and induce budding of the vesicles. Interacts with COPG1; the interaction involves TMED10 homodimer. Interacts with ARF1 (GDP-bound); the interaction probably involves a TMED10 oligomer. Interacts with SEC23A, SEC24B, SEC24C and SEC24D components of the coat protein complex II/COPII, indicative of an association of TMED10 with the COPII vesicle coat. Interacts with CD59. Interacts with MPPE1/PGAP5; the complex might recruit and sort GPI-anchored proteins to the ER-exit site, or the interaction might lead to recycling of PGAP5 between the ER and the Golgi. Interacts with F2LR1/PAR2. Interacts with KDELR2/ERD2; the interaction is disrupted by KDELR2 ligand. Found in a complex composed at least of SURF4, TMED2 and TMED10. Associates with the presenilin-dependent gamma-secretase complex. Interacts with STX17; the interaction is direct. Interacts with IL-1; the interaction is direct. Interacts with RAB21 (active GTP-bound form); the interaction is indirect and regulates TMED10 abundance and localization at the Golgi.

It is found in the endoplasmic reticulum membrane. The protein resides in the endoplasmic reticulum-Golgi intermediate compartment membrane. The protein localises to the golgi apparatus membrane. It localises to the golgi apparatus. Its subcellular location is the cis-Golgi network membrane. It is found in the trans-Golgi network membrane. The protein resides in the cytoplasmic vesicle. The protein localises to the secretory vesicle membrane. It localises to the cell membrane. Its subcellular location is the melanosome. Cargo receptor involved in protein vesicular trafficking and quality control in the endoplasmic reticulum (ER) and Golgi. The p24 protein family is a group of transmembrane proteins that bind coat protein complex I/COPI and coat protein complex II/COPII involved in vesicular trafficking between the membranes. Acts at the lumenal side for incorporation of secretory cargo molecules into transport vesicles and involved in vesicle coat formation at the cytoplasmic side. Mainly functions in the early secretory pathway and cycles between the ER, ER-Golgi intermediate compartment (ERGIC) and Golgi, mediating cargo transport through COPI and COPII-coated vesicles. In COPII vesicle-mediated anterograde transport, involved in the transport of GPI-anchored proteins by acting together with TMED2 as their cargo receptor; the function specifically implies SEC24C and SEC24D of the COPII vesicle coat and lipid raft-like microdomains of the ER. Recognizes GPI anchors structural remodeled in the ER by the GPI inositol-deacylase/PGAP1 and the metallophosphoesterase MPPE1/PGAP5. In COPI vesicle-mediated retrograde transport, involved in the biogenesis of COPI vesicles and vesicle coat recruitment. Involved in trafficking of amyloid beta A4 protein and soluble APP-beta release (independent from the modulation of gamma-secretase activity). Involved in the KDELR2-mediated retrograde transport of the toxin A subunit (CTX-A-K63)together with COPI and the COOH terminus of KDELR2. On Golgi membranes, acts as a primary receptor for ARF1-GDP, a GTP-binding protein involved in COPI-vesicle formation. Increases coatomer-dependent GTPase-activating activity of ARFGAP2 which mediates the hydrolysis of ARF1-bound GTP and therefore modulates protein trafficking from the Golgi apparatus. Involved in the exocytic trafficking of G protein-coupled receptors F2LR1/PAR2 (trypsin and tryspin-like enzyme receptor), OPRM1 (opioid receptor) and P2RY4 (UTD and UDP receptor) from the Golgi to the plasma membrane, thus contributing to receptor resensitization. In addition to its cargo receptor activity, may also act as a protein channel after oligomerization, facilitating the post-translational entry of leaderless cytoplasmic cargo into the ERGIC. Involved in the translocation into ERGIC, the vesicle entry and the secretion of leaderless cargos (lacking the secretion signal sequence), including the mature form of interleukin 1/IL-1 family members, the alpha-crystallin B chain HSPB5, the carbohydrate-binding proteins galectin-1/LGALS1 and galectin-3/LGALS3, the microtubule-associated protein Tau/MAPT, and the annexin A1/ANXA1; the translocation process is dependent on cargo protein unfolding and enhanced by chaperones HSP90AB1 and HSP90B1/GRP9. Could also associates with the presenilin-dependent gamma-secretase complex in order to regulate gamma-cleavages of the amyloid beta A4 protein to yield amyloid-beta 40/Abeta40. This Mesocricetus auratus (Golden hamster) protein is Transmembrane emp24 domain-containing protein 10 (TMED10).